A 532-amino-acid chain; its full sequence is Probable NAD kinase 1 (532 aa).

Over residues 1-26 (MSLDELPHKVSDERVNHDTVTSHESE) the composition is skewed to basic and acidic residues. The interval 1-32 (MSLDELPHKVSDERVNHDTVTSHESEIGSGSI) is disordered.

This sequence belongs to the NAD kinase family.

The catalysed reaction is NAD(+) + ATP = ADP + NADP(+) + H(+). In Oryza sativa subsp. japonica (Rice), this protein is Probable NAD kinase 1.